Reading from the N-terminus, the 655-residue chain is A-type voltage-gated potassium channel KCND3 (655 aa).

The Cytoplasmic segment spans residues 1-182 (MAAGVAAWLP…FENPHTSTLA (182 aa)). Residues 6 to 21 (AAWLPFARAAAIGWMP) form an interaction with KCNIP1 and KCNIP2 region. Residues 70–78 (EKEFFFNED) are interaction with KCNIP1. His-104, Cys-110, Cys-131, and Cys-132 together coordinate Zn(2+). The residue at position 153 (Ser-153) is a Phosphoserine. Residues 183–204 (LVFYYVTGFFIAVSVITNVVET) form a helical membrane-spanning segment. At 205–223 (VPCGTVPGSKELPCGERYS) the chain is on the extracellular side. The helical transmembrane segment at 224–246 (VAFFCLDTACVMIFTVEYLLRLF) threads the bilayer. Residues 247 to 253 (AAPSRYR) lie on the Cytoplasmic side of the membrane. A helical membrane pass occupies residues 254–277 (FIRSVMSIIDVVAIMPYYIGLVMT). Residues 278–283 (NNEDVS) lie on the Extracellular side of the membrane. The helical; Voltage-sensor transmembrane segment at 284-306 (GAFVTLRVFRVFRIFKFSRHSQG) threads the bilayer. Residues 307–318 (LRILGYTLKSCA) are Cytoplasmic-facing. A helical transmembrane segment spans residues 319-343 (SELGFLLFSLTMAIIIFATVMFYAE). Topologically, residues 344 to 352 (KGSSASKFT) are extracellular. The segment at residues 353-366 (SIPASFWYTIVTMT) is an intramembrane region (helical). K(+) is bound by residues Thr-367, Leu-368, Gly-369, and Tyr-370. Residues 367-372 (TLGYGD) carry the Selectivity filter motif. An intramembrane segment occupies 367 to 374 (TLGYGDMV). A helical transmembrane segment spans residues 378 to 400 (IAGKIFGSICSLSGVLVIALPVP). Residues 401–655 (VIVSNFSRIY…ASNVVKVSVL (255 aa)) lie on the Cytoplasmic side of the membrane. A Phosphothreonine modification is found at Thr-459. An interaction with KCNIP1 and KCNIP2 region spans residues 470-487 (SLIESQHHHLLHCLEKTT). The interval 472-487 (IESQHHHLLHCLEKTT) is mediates dendritic targeting. The residue at position 569 (Ser-569) is a Phosphoserine; by CaMK2D. Ser-585 carries the phosphoserine modification. Residues 618–644 (PAPPALTPEGETRPPPASPGPNTNIPS) form a disordered region.

This sequence belongs to the potassium channel family. D (Shal) (TC 1.A.1.2) subfamily. Kv4.3/KCND3 sub-subfamily. Homotetramer. Heterotetramer with KCND2. Associates with the regulatory subunits KCNIP3 and KCNIP4. Interacts with KCNE1, KCNE2, SCN1B and KCNAB1 and DLG1. Component of heteromultimeric potassium channels. Identified in potassium channel complexes containing KCND1, KCND2, KCND3, KCNIP1, KCNIP2, KCNIP3, KCNIP4, DPP6 and DPP10. Interacts with KCNIP1; each KCNIP1 monomer interacts with two adjacent KCND3 subunits, through both the N-terminal inactivation ball of a KCND3 subunit and a C-terminal helix from the adjacent KCND3 subunit, clamping them together; this interaction stabilizes the tetrameric form and modulates the channel gating kinetics namely channel activation and inactivation kinetics and rate of recovery from inactivation. Interacts with DPP6; this interaction modulates the channel gating kinetics namely channel activation and inactivation kinetics and rate of recovery from inactivation. Interacts with KCNIP2; each KCNIP2 monomer interacts with two adjacent KCND3 subunits, through both the N-terminal inactivation ball of a KCND3 subunit and a C-terminal helix from the adjacent KCND3 subunit, clamping them together; this interaction modulates the channel gating kinetics. Post-translationally, regulated through phosphorylation at Ser-569 by CaMK2D. As to expression, detected in carotid body chemoreceptor cells and in frontal cortex.

The protein resides in the cell membrane. Its subcellular location is the sarcolemma. The protein localises to the cell projection. It localises to the dendrite. The enzyme catalyses K(+)(in) = K(+)(out). Its function is as follows. Pore-forming (alpha) subunit of voltage-gated A-type potassium channels that mediates transmembrane potassium transport in excitable membranes, in brain and heart. In cardiomyocytes, may generate the transient outward potassium current I(To). In neurons, may conduct the transient subthreshold somatodendritic A-type potassium current (ISA). Kinetics properties are characterized by fast activation at subthreshold membrane potentials, rapid inactivation, and quick recovery from inactivation. Channel properties are modulated by interactions with regulatory subunits. Interaction with the regulatory subunits KCNIP1 or KCNIP2 modulates the channel gating kinetics namely channel activation and inactivation kinetics and rate of recovery from inactivation. Likewise, interaction with DPP6 modulates the channel gating kinetics namely channel activation and inactivation kinetics. This is A-type voltage-gated potassium channel KCND3 from Oryctolagus cuniculus (Rabbit).